Consider the following 568-residue polypeptide: Acyl-CoA ligase gloD (568 aa).

ATP is bound by residues 211 to 219 (TSGTSGFLK), 352 to 357 (PGYGLT), D436, R455, and K553. The interval 282-352 (DMQIALKSVQ…QLCPEWEINP (71 aa)) is SBD1. Residues 353–415 (GYGLTESFVC…VRSPSVMKEY (63 aa)) are SBD2.

It belongs to the ATP-dependent AMP-binding enzyme family.

Its pathway is mycotoxin biosynthesis. Functionally, acyl-CoA ligase; part of the gene cluster that mediates the biosynthesis of pneumocandins, lipohexapeptides of the echinocandin family that prevent fungal cell wall formation by non-competitive inhibition of beta-1,3-glucan synthase. The 10,12-dimethylmyristoyl side chain is synthesized by the reducing polyketide synthase gloL/GLPKS4. The thioesterase gloN/GLHYD exclusively interacts with gloL/GLPKS4 to maintain turnover of the polyketide side chain. The 10R,12S-dimethylmyristic acid is then transferred to the first thiolation domain of the nonribosomal peptide synthetase gloA/GLNRPS4 by the acyl-AMP ligase gloD/GLligase, followed by its acylation to L-ornithine to trigger elongation of the cyclic hexapeptide. L-ornithine, 4R-hydroxyl-L-proline (generated from L-proline by the dioxygenase gloF/GLOXY2), 3S-hydroxyl-L-homotyrosine (generated by gloG/GLHtyB, gloH/GLHtyA, gloI/GLHtyC, gloJ/GLHtyD and hydroxylated at C-3 by the dioxygenase gloM/GLOXY1), 3R-hydroxyl-L-glutamine (generated from L-glutamine probably by the dioxygenase gloE/GLOXY3) and 3S-hydroxyl-L-proline (generated from L-proline by the dioxygenase gloF/GLOXY2 to yield pneumocandin B0), or 3S-hydroxyl-4S-methyl-L-proline (generated from L-leucine by the dioxygenase gloC/GLOXY4 to yield pneumocandin A0) are sequentially added to the growing chain. The last C domain of gloA/GLNRPS4 is proposed to be responsible for cyclization by condensation to form the peptide bond between L-ornithine and 3S-hydroxyl-4S-methyl-L-proline (for pneumocandin A0) or 3S-hydroxyl-L-proline (for pneumocandin B0). Finally, the subsequent C-4 hydroxylation of 3S-hydroxyl-L-homotyrosine and L-ornithine dihydroxylation at C-4 and C-5 are performed by the cytochrome P450 monooxygenases gloP/GLP450-1 and gloO/GLP450-2, respectively. This chain is Acyl-CoA ligase gloD, found in Glarea lozoyensis (strain ATCC 20868 / MF5171).